Consider the following 325-residue polypeptide: GMP reductase (325 aa).

The Thioimidate intermediate role is filled by C174. 203-226 (MIADGGIRTHGDIAKSIRFGASMV) provides a ligand contact to NADP(+).

It belongs to the IMPDH/GMPR family. GuaC type 2 subfamily.

It catalyses the reaction IMP + NH4(+) + NADP(+) = GMP + NADPH + 2 H(+). In terms of biological role, catalyzes the irreversible NADPH-dependent deamination of GMP to IMP. It functions in the conversion of nucleobase, nucleoside and nucleotide derivatives of G to A nucleotides, and in maintaining the intracellular balance of A and G nucleotides. In Staphylococcus carnosus (strain TM300), this protein is GMP reductase.